A 49-amino-acid polypeptide reads, in one-letter code: Large ribosomal subunit protein bL33 (49 aa).

This sequence belongs to the bacterial ribosomal protein bL33 family.

The sequence is that of Large ribosomal subunit protein bL33 from Moorella thermoacetica (strain ATCC 39073 / JCM 9320).